We begin with the raw amino-acid sequence, 466 residues long: Adenosylhomocysteinase (466 aa).

Threonine 57, aspartate 132, and glutamate 192 together coordinate substrate. Residue 193–195 participates in NAD(+) binding; it reads TTT. Substrate contacts are provided by lysine 222 and aspartate 226. NAD(+) contacts are provided by residues asparagine 227, 256-261, glutamate 279, asparagine 314, 335-337, and asparagine 380; these read GYGDVG and IGH.

Belongs to the adenosylhomocysteinase family. It depends on NAD(+) as a cofactor.

Its subcellular location is the cytoplasm. The enzyme catalyses S-adenosyl-L-homocysteine + H2O = L-homocysteine + adenosine. It participates in amino-acid biosynthesis; L-homocysteine biosynthesis; L-homocysteine from S-adenosyl-L-homocysteine: step 1/1. Its function is as follows. May play a key role in the regulation of the intracellular concentration of adenosylhomocysteine. The sequence is that of Adenosylhomocysteinase from Rhizobium leguminosarum bv. trifolii (strain WSM2304).